The chain runs to 357 residues: Putative DNA directed RNA polymerase subunit R470 (357 aa).

It belongs to the archaeal Rpo11/eukaryotic RPB11/RPC19 RNA polymerase subunit family.

It is found in the virion. It carries out the reaction RNA(n) + a ribonucleoside 5'-triphosphate = RNA(n+1) + diphosphate. The protein is Putative DNA directed RNA polymerase subunit R470 of Acanthamoeba polyphaga mimivirus (APMV).